Reading from the N-terminus, the 350-residue chain is Galactokinase (350 aa).

14–17 contributes to the substrate binding site; that stretch reads EHTD. ATP contacts are provided by residues Ser46 and 96-102; that span reads GAGLSSS. Residues Ser102 and Glu134 each contribute to the Mg(2+) site. Residue Asp146 is the Proton acceptor of the active site. Tyr196 provides a ligand contact to substrate.

Belongs to the GHMP kinase family. GalK subfamily.

The protein localises to the cytoplasm. It carries out the reaction alpha-D-galactose + ATP = alpha-D-galactose 1-phosphate + ADP + H(+). It functions in the pathway carbohydrate metabolism; galactose metabolism. Functionally, catalyzes the transfer of the gamma-phosphate of ATP to D-galactose to form alpha-D-galactose-1-phosphate (Gal-1-P). The protein is Galactokinase of Thermotoga petrophila (strain ATCC BAA-488 / DSM 13995 / JCM 10881 / RKU-1).